The primary structure comprises 480 residues: Argininosuccinate lyase (480 aa).

The protein belongs to the lyase 1 family. Argininosuccinate lyase subfamily.

The protein resides in the cytoplasm. It carries out the reaction 2-(N(omega)-L-arginino)succinate = fumarate + L-arginine. Its pathway is amino-acid biosynthesis; L-arginine biosynthesis; L-arginine from L-ornithine and carbamoyl phosphate: step 3/3. This Ruthia magnifica subsp. Calyptogena magnifica protein is Argininosuccinate lyase.